The following is a 65-amino-acid chain: Large ribosomal subunit protein bL31 (65 aa).

The Zn(2+) site is built by Cys16, Cys18, Cys36, and Cys39.

This sequence belongs to the bacterial ribosomal protein bL31 family. Type A subfamily. In terms of assembly, part of the 50S ribosomal subunit. It depends on Zn(2+) as a cofactor.

Its function is as follows. Binds the 23S rRNA. This is Large ribosomal subunit protein bL31 from Alkaliphilus metalliredigens (strain QYMF).